The sequence spans 121 residues: Small ribosomal subunit protein eS24 (121 aa).

Belongs to the eukaryotic ribosomal protein eS24 family.

The polypeptide is Small ribosomal subunit protein eS24 (Pyrobaculum arsenaticum (strain DSM 13514 / JCM 11321 / PZ6)).